Here is a 116-residue protein sequence, read N- to C-terminus: Large ribosomal subunit protein bL21c (116 aa).

The protein belongs to the bacterial ribosomal protein bL21 family. In terms of assembly, part of the 50S ribosomal subunit.

It localises to the plastid. It is found in the chloroplast. In terms of biological role, this protein binds to 23S rRNA. The chain is Large ribosomal subunit protein bL21c from Emiliania huxleyi (Coccolithophore).